The sequence spans 242 residues: Cysteine desulfuration protein SufE (242 aa).

The Cysteine persulfide intermediate role is filled by Cys148.

This sequence belongs to the SufE family. Monomer. Interacts with SufS; interaction enhances cysteine desulfurase activity of SufS.

Its subcellular location is the plastid. It localises to the apicoplast. Its pathway is cofactor biosynthesis; iron-sulfur cluster biosynthesis. Participates in sulfur mobilization (SUF) pathway for iron-sulfur (Fe-S) cluster biogenesis. Enhances cysteine desulfurase activity of SufS. Probably functions as a sulfur acceptor for SufS. This chain is Cysteine desulfuration protein SufE, found in Plasmodium vivax.